Reading from the N-terminus, the 309-residue chain is Probable manganese-dependent inorganic pyrophosphatase (309 aa).

Mn(2+)-binding residues include His9, Asp13, Asp15, Asp75, His97, and Asp149.

The protein belongs to the PPase class C family. It depends on Mn(2+) as a cofactor.

It is found in the cytoplasm. The enzyme catalyses diphosphate + H2O = 2 phosphate + H(+). This chain is Probable manganese-dependent inorganic pyrophosphatase, found in Bacillus cereus (strain AH187).